Reading from the N-terminus, the 981-residue chain is Tudor domain-containing protein 5 (981 aa).

The HTH OST-type 1 domain occupies 7 to 80 (IQECLRKEIR…GGTVILKAIP (74 aa)). The segment covering 98-108 (HKLRNSMHKGR) has biased composition (basic residues). Positions 98–118 (HKLRNSMHKGRPSIYSGPRSH) are disordered. HTH OST-type domains lie at 127–202 (VAPI…LKKS) and 295–369 (ISSE…FDAD). A Tudor domain is found at 525 to 584 (FIQPGHLCCVRISEDKWWYRVIIHRVLEKQEVEVFYPDFGNIGIVQKSSLRFLKCCYTKL). A disordered region spans residues 808–908 (EVHKPEVLGA…SVESSPEILK (101 aa)). Polar residues-rich tracts occupy residues 819–842 (EKNTGTNRTQKQLDINGSSDSSTL) and 850–889 (TSLTQSEQSADGSQSEPNNSQTQPKQIQLSTAAPCSTTAV). Ser892 is modified (phosphoserine).

This sequence belongs to the TDRD5 family.

The protein resides in the cytoplasm. Functionally, required during spermiogenesis to participate in the repression transposable elements and prevent their mobilization, which is essential for the germline integrity. Probably acts via the piRNA metabolic process, which mediates the repression of transposable elements during meiosis by forming complexes composed of piRNAs and Piwi proteins and govern the methylation and subsequent repression of transposons. Required for chromatoid body (CB) assembly. The polypeptide is Tudor domain-containing protein 5 (TDRD5) (Homo sapiens (Human)).